A 402-amino-acid chain; its full sequence is MTRLLWLFAAITASLAQDEISQDKWKLARANNYLGLNLLKQLPSNDKTNVFLSPFSVSTAMGMAYAGARGDTLEQLTLNFGYAADELNEGKVLALFKEQLQSTNDLPHDYTLNIANAAVAQEGYGILPEYTDALTSSFGAEYIEADFQKRGQEAIQKINAWVSNRTHGKVQSLFDEPPDFSTRLILLNAIYYKGTWLYEFDKTKTKPRSFYNGGVEKVQVPMMRLKSTLNHTYNAILNADLVDLPYVGNDFSMTIILPREKTGLASLKSVLTSQTLNLALQNMYPKDMKLKLPKFKLDTKYTLKPPLEAMGITKIFSADADLSGISGSRNLYVFDVLHKAVLEVNEEGSEAAAVTGFVIQLRTAAFVTPPPLPKVYVDHPFIFLIRNSKTNTIMFLGEINAL.

The N-terminal stretch at 1–16 (MTRLLWLFAAITASLA) is a signal peptide. Asn164 and Asn230 each carry an N-linked (GlcNAc...) asparagine glycan.

Belongs to the serpin family. In terms of assembly, interacts with host thrombin/F2. Interacts with host coagulation factor VII/F7 (activated). Interacts with host coagulation factor X/F10 (activated). Interacts with host coagulation factor XII/F12 (activated). Interacts with host coagulation factor IX/F9 (activated). Interacts with host plasmin/PLG. Interacts with host protein C/PROC (activated). Saliva (at protein level). Salivary gland. Midgut. Low-level expression in ovary.

It is found in the secreted. In terms of biological role, serine protease inhibitor that modulates blood feeding of ticks on vertebrate species. Inhibits the intrinsic and common pathways of blood coagulation in the host. Inhibits host thrombin, factor VIIa, factor Xa, factor XIa, factor XIIa, plasmin and activated protein C. Inhibits host trypsin and kallikrein. Reduces host complement activity. Does not affect proliferation of CD4+ T-cells and neutrophil migration. The protein is Iripin-8 of Ixodes ricinus (Common tick).